A 489-amino-acid chain; its full sequence is Rhamnulokinase (489 aa).

Residue 13-17 coordinates ATP; the sequence is ASSGR. A disulfide bridge links C68 with C222. Residues G83 and 236-238 each bind substrate; that span reads HDT. D237 acts as the Proton acceptor in catalysis. T259 is an ATP binding site. A substrate-binding site is contributed by N296. Residue Q304 participates in ATP binding. Residues C353 and C370 are joined by a disulfide bond. G402 lines the ATP pocket. Residues C413 and C417 are joined by a disulfide bond.

The protein belongs to the rhamnulokinase family. Mg(2+) is required as a cofactor.

The catalysed reaction is L-rhamnulose + ATP = L-rhamnulose 1-phosphate + ADP + H(+). The protein operates within carbohydrate degradation; L-rhamnose degradation; glycerone phosphate from L-rhamnose: step 2/3. Its function is as follows. Involved in the catabolism of L-rhamnose (6-deoxy-L-mannose). Catalyzes the transfer of the gamma-phosphate group from ATP to the 1-hydroxyl group of L-rhamnulose to yield L-rhamnulose 1-phosphate. This Salmonella typhi protein is Rhamnulokinase.